The chain runs to 224 residues: Redox-sensing transcriptional repressor Rex (224 aa).

Positions Arg-17–Phe-56 form a DNA-binding region, H-T-H motif. Residue Gly-91–Gly-96 participates in NAD(+) binding.

Belongs to the transcriptional regulatory Rex family. As to quaternary structure, homodimer.

The protein localises to the cytoplasm. Its function is as follows. Modulates transcription in response to changes in cellular NADH/NAD(+) redox state. The sequence is that of Redox-sensing transcriptional repressor Rex from Thermoanaerobacter sp. (strain X514).